The primary structure comprises 325 residues: Holliday junction branch migration complex subunit RuvB (325 aa).

The large ATPase domain (RuvB-L) stretch occupies residues 1 to 172 (MENNELLDIT…FGVVFRLEFY (172 aa)). ATP-binding positions include L11, R12, G53, K56, T57, T58, 119-121 (EDF), R162, Y172, and R209. Mg(2+) is bound at residue T57. A small ATPAse domain (RuvB-S) region spans residues 173–243 (NSEELKEIVK…IAQEALIAMD (71 aa)). The interval 246-325 (DYGLDDMDRK…LKRKIPERLF (80 aa)) is head domain (RuvB-H). Residues R301 and R306 each contribute to the DNA site.

This sequence belongs to the RuvB family. In terms of assembly, homohexamer. Forms an RuvA(8)-RuvB(12)-Holliday junction (HJ) complex. HJ DNA is sandwiched between 2 RuvA tetramers; dsDNA enters through RuvA and exits via RuvB. An RuvB hexamer assembles on each DNA strand where it exits the tetramer. Each RuvB hexamer is contacted by two RuvA subunits (via domain III) on 2 adjacent RuvB subunits; this complex drives branch migration. In the full resolvosome a probable DNA-RuvA(4)-RuvB(12)-RuvC(2) complex forms which resolves the HJ.

It localises to the cytoplasm. It catalyses the reaction ATP + H2O = ADP + phosphate + H(+). The RuvA-RuvB-RuvC complex processes Holliday junction (HJ) DNA during genetic recombination and DNA repair, while the RuvA-RuvB complex plays an important role in the rescue of blocked DNA replication forks via replication fork reversal (RFR). RuvA specifically binds to HJ cruciform DNA, conferring on it an open structure. The RuvB hexamer acts as an ATP-dependent pump, pulling dsDNA into and through the RuvAB complex. RuvB forms 2 homohexamers on either side of HJ DNA bound by 1 or 2 RuvA tetramers; 4 subunits per hexamer contact DNA at a time. Coordinated motions by a converter formed by DNA-disengaged RuvB subunits stimulates ATP hydrolysis and nucleotide exchange. Immobilization of the converter enables RuvB to convert the ATP-contained energy into a lever motion, pulling 2 nucleotides of DNA out of the RuvA tetramer per ATP hydrolyzed, thus driving DNA branch migration. The RuvB motors rotate together with the DNA substrate, which together with the progressing nucleotide cycle form the mechanistic basis for DNA recombination by continuous HJ branch migration. Branch migration allows RuvC to scan DNA until it finds its consensus sequence, where it cleaves and resolves cruciform DNA. The sequence is that of Holliday junction branch migration complex subunit RuvB from Thermodesulfovibrio yellowstonii (strain ATCC 51303 / DSM 11347 / YP87).